The primary structure comprises 374 residues: Golgi-associated kinase 1B (374 aa).

The Cytoplasmic portion of the chain corresponds to 1 to 38 (MSPDRTGRGSSSSSSSLKRLVCKSFVRAWGRRRPNLRR). A helical; Signal-anchor for type II membrane protein transmembrane segment spans residues 39–61 (AVLLICTASAIYGIVIASQVLRG). Topologically, residues 62-374 (STHPGKALRK…LLQVYTRLDR (313 aa)) are extracellular. Residues 136 to 146 (VRPKKRRKYGA) are compositionally biased toward basic residues. Positions 136-177 (VRPKKRRKYGARRPGVVQDTESKKDTLWSKVPNSQHKSQAQS) are disordered. Residues 166–177 (VPNSQHKSQAQS) are compositionally biased toward polar residues. N-linked (GlcNAc...) asparagine glycans are attached at residues Asn281 and Asn314.

This sequence belongs to the GASK family.

It localises to the golgi apparatus membrane. The sequence is that of Golgi-associated kinase 1B from Xenopus laevis (African clawed frog).